The sequence spans 120 residues: Large ribosomal subunit protein bL36m (120 aa).

Belongs to the bacterial ribosomal protein bL36 family. In terms of assembly, component of the mitochondrial ribosome large subunit (39S) which comprises a 16S rRNA and about 50 distinct proteins.

It localises to the mitochondrion. The sequence is that of Large ribosomal subunit protein bL36m (mrpl36) from Osmerus mordax (Rainbow smelt).